We begin with the raw amino-acid sequence, 148 residues long: Lysozyme-like protein 2 (148 aa).

An N-terminal signal peptide occupies residues 1 to 19 (MKAAGILTLIGCLVTGAES). A C-type lysozyme domain is found at 20 to 148 (KIYTRCKLAK…SDWKKDCEVS (129 aa)). Disulfide bonds link C25/C145, C49/C133, C83/C98, and C94/C112. The active site involves E54. N-linked (GlcNAc...) asparagine glycosylation is present at N58. D71 is a catalytic residue.

It belongs to the glycosyl hydrolase 22 family. In terms of assembly, monomer. In terms of tissue distribution, expressed in testis, epididymis and placenta.

The protein resides in the secreted. It carries out the reaction Hydrolysis of (1-&gt;4)-beta-linkages between N-acetylmuramic acid and N-acetyl-D-glucosamine residues in a peptidoglycan and between N-acetyl-D-glucosamine residues in chitodextrins.. The protein is Lysozyme-like protein 2 (LYZL2) of Homo sapiens (Human).